Here is a 197-residue protein sequence, read N- to C-terminus: MKVLQEKILNEGKVLSGDVLKVDAFLNHQIDPVLMQEIGKEFAKRFKEENITKIVTIESSGIAPAVMAALELGVKVIFARKRKSLTLQDNMYVANVYSFTKQETNEISLSRNHIDESDRVLIIDDFLANGQAALGLMSLVEQAGASIAGIGIVIEKAFQDGGKKLREQGVRVESLAEIASLGNGTVTFVQHETAEVK.

Residues L20 and N27 each coordinate xanthine. Position 128-132 (128-132 (ANGQA)) interacts with 5-phospho-alpha-D-ribose 1-diphosphate. K156 serves as a coordination point for xanthine.

This sequence belongs to the purine/pyrimidine phosphoribosyltransferase family. Xpt subfamily. Homodimer.

The protein resides in the cytoplasm. The enzyme catalyses XMP + diphosphate = xanthine + 5-phospho-alpha-D-ribose 1-diphosphate. The protein operates within purine metabolism; XMP biosynthesis via salvage pathway; XMP from xanthine: step 1/1. Its function is as follows. Converts the preformed base xanthine, a product of nucleic acid breakdown, to xanthosine 5'-monophosphate (XMP), so it can be reused for RNA or DNA synthesis. The polypeptide is Xanthine phosphoribosyltransferase (Bacillus thuringiensis (strain Al Hakam)).